A 155-amino-acid chain; its full sequence is Small ribosomal subunit protein uS7 (155 aa).

This sequence belongs to the universal ribosomal protein uS7 family. As to quaternary structure, part of the 30S ribosomal subunit. Contacts proteins S9 and S11.

In terms of biological role, one of the primary rRNA binding proteins, it binds directly to 16S rRNA where it nucleates assembly of the head domain of the 30S subunit. Is located at the subunit interface close to the decoding center, probably blocks exit of the E-site tRNA. The protein is Small ribosomal subunit protein uS7 of Helicobacter hepaticus (strain ATCC 51449 / 3B1).